The chain runs to 1141 residues: Serine-aspartate repeat-containing protein E (1141 aa).

A signal peptide spans 1-52 (MINRDNKKAITKKGMISNRLNKFSIRKYTVGTASILVGTTLIFGLGNQEAKA). The short motif at 23–34 (FSIRKYTVGTAS) is the YSIRK-G/S signaling motif element. Residues 53–601 (AENTSTENAK…GDGTVKPEEK (549 aa)) are ligand binding A region. Residues 54–248 (ENTSTENAKQ…RSTKPVATAP (195 aa)) are disordered. The segment covering 61–75 (AKQDDATTSDNKEVV) has biased composition (basic and acidic residues). A compositionally biased stretch (low complexity) spans 77–90 (ETENNSTTENDSTN). Residues 92-108 (IKKETNTDSQPEAKEES) show a composition bias toward basic and acidic residues. The segment covering 109-126 (TTSSTQQQQNNVTATTET) has biased composition (low complexity). Positions 130 to 145 (NIEKENVKPSTDKTAT) are enriched in basic and acidic residues. Polar residues predominate over residues 159-207 (NYTNNDVTTKPSTSEIQTKPTTPQESTNIENSQPQPTPSKVDNQVTDAT). The segment covering 216-241 (SKEELKNNPEKLKELVRNDNNTDRST) has biased composition (basic and acidic residues). 3 consecutive CNA-B domains span residues 602–714 (LYKI…YKEP), 715–824 (KYNL…YKTP), and 825–935 (KYSL…EEDT). Positions 929–1117 (GYFEEDTSDS…GSENNGSNNA (189 aa)) are disordered. Residues 930–1080 (YFEEDTSDSD…DSDSDSDSDS (151 aa)) are compositionally biased toward acidic residues. Positions 1104 to 1108 (LPETG) match the LPXTG sorting signal motif. Residue threonine 1107 is modified to Pentaglycyl murein peptidoglycan amidated threonine. Positions 1108–1141 (GSENNGSNNATLFGGLFAALGSLLLFGRRKKQNK) are cleaved as a propeptide — removed by sortase.

The protein belongs to the serine-aspartate repeat-containing protein (SDr) family. In terms of assembly, interacts with host complement factor H/CFAH (via C-terminus). Interacts with host complement regulator C4BPA.

The protein localises to the secreted. The protein resides in the cell wall. Its function is as follows. Cell surface-associated calcium-binding protein which plays an important role in adhesion and pathogenesis. Contributes to the resistance to killing by innate immune components in blood and thus attenuates bacterial clearance by interacting with host complement factor H/CFAH and modulating its activity. Inhibits also bacterial opsonization and killing by interacting with host complement regulator C4BPA and thus inhibiting classical complement pathway activation. The protein is Serine-aspartate repeat-containing protein E (sdrE) of Staphylococcus aureus (strain Mu50 / ATCC 700699).